Reading from the N-terminus, the 1397-residue chain is DNA-directed RNA polymerase subunit beta' (1397 aa).

Positions 71, 73, 86, and 89 each coordinate Zn(2+). The Mg(2+) site is built by Asp-462, Asp-464, and Asp-466. 4 residues coordinate Zn(2+): Cys-811, Cys-885, Cys-892, and Cys-895. Residues 1368 to 1397 (QNRDDKILEDQGGATPTASTEIKEPAEGAA) form a disordered region. The span at 1388-1397 (EIKEPAEGAA) shows a compositional bias: basic and acidic residues.

It belongs to the RNA polymerase beta' chain family. In terms of assembly, the RNAP catalytic core consists of 2 alpha, 1 beta, 1 beta' and 1 omega subunit. When a sigma factor is associated with the core the holoenzyme is formed, which can initiate transcription. Mg(2+) is required as a cofactor. Zn(2+) serves as cofactor.

It carries out the reaction RNA(n) + a ribonucleoside 5'-triphosphate = RNA(n+1) + diphosphate. DNA-dependent RNA polymerase catalyzes the transcription of DNA into RNA using the four ribonucleoside triphosphates as substrates. The chain is DNA-directed RNA polymerase subunit beta' from Parvibaculum lavamentivorans (strain DS-1 / DSM 13023 / NCIMB 13966).